We begin with the raw amino-acid sequence, 332 residues long: MVKIAIDAMGGDFGPKPIIDGCIQALKQKLFIPILVGKKSEILPLLPKRYRDKISIVEADDVVSMHDAATDALKRSESSIYKAIELVKNGEAQGVVSAGHSGATMTLATLRLGRLKGVLRPALVALMPTKSSRRSVILDVGANVDSKAEHLMQFAVMGGCYAEDMFKITTPSIGLLANGEEKSKGNELTKATFKLLEGYKGFKGNVEGSDIFNASCDVIVCDGFVGNLVLKASEGVASTITGLIKEYIRKSPVAITGALLMRKVFVLLKKQMDYAEIGGAPLIGIQGCVIVSHGKSNPKAIKNAIFQAISYVDTGVNGHIIQRLETLKNREN.

This sequence belongs to the PlsX family. In terms of assembly, homodimer. Probably interacts with PlsY.

The protein localises to the cytoplasm. The catalysed reaction is a fatty acyl-[ACP] + phosphate = an acyl phosphate + holo-[ACP]. It functions in the pathway lipid metabolism; phospholipid metabolism. Its function is as follows. Catalyzes the reversible formation of acyl-phosphate (acyl-PO(4)) from acyl-[acyl-carrier-protein] (acyl-ACP). This enzyme utilizes acyl-ACP as fatty acyl donor, but not acyl-CoA. In Sulfurimonas denitrificans (strain ATCC 33889 / DSM 1251) (Thiomicrospira denitrificans (strain ATCC 33889 / DSM 1251)), this protein is Phosphate acyltransferase.